The following is a 277-amino-acid chain: MTQMNFTDKIKVAIIANGKYQSKRLTAKLFAILRNDDRFYLTKKNPDIVITIGGDGMLLSAFHMYEKCLDHVRFVGIHTGHLGFYTDYRDFEVDKLLENLHSDKGEKASYPILKVTATLADGRQLTSRALNEATIRRIEKTMVADVVINKVHFERFRGDGISVSTPTGSTAYNKSLGGAVLHPTIEALQLTEISSLNNRVFRTLGSSIIVPKKDKIEIVPKRLGSYVLSIDNKTYTHRNVAKIEYEIDRKKISFVSTPSHTSFWERVKDAFIGDFDS.

Residue D55 is the Proton acceptor of the active site. Residues 55–56 (DG), 131–132 (NE), R157, D159, and 170–175 (TAYNKS) each bind NAD(+).

It belongs to the NAD kinase family. A divalent metal cation is required as a cofactor.

It is found in the cytoplasm. It catalyses the reaction NAD(+) + ATP = ADP + NADP(+) + H(+). In terms of biological role, involved in the regulation of the intracellular balance of NAD and NADP, and is a key enzyme in the biosynthesis of NADP. Catalyzes specifically the phosphorylation on 2'-hydroxyl of the adenosine moiety of NAD to yield NADP. The protein is NAD kinase of Streptococcus mutans serotype c (strain ATCC 700610 / UA159).